A 403-amino-acid chain; its full sequence is Phosphopentomutase (403 aa).

Residues aspartate 13, aspartate 298, histidine 303, aspartate 339, histidine 340, and histidine 351 each coordinate Mn(2+).

The protein belongs to the phosphopentomutase family. Mn(2+) serves as cofactor.

The protein resides in the cytoplasm. It carries out the reaction 2-deoxy-alpha-D-ribose 1-phosphate = 2-deoxy-D-ribose 5-phosphate. It catalyses the reaction alpha-D-ribose 1-phosphate = D-ribose 5-phosphate. Its pathway is carbohydrate degradation; 2-deoxy-D-ribose 1-phosphate degradation; D-glyceraldehyde 3-phosphate and acetaldehyde from 2-deoxy-alpha-D-ribose 1-phosphate: step 1/2. In terms of biological role, isomerase that catalyzes the conversion of deoxy-ribose 1-phosphate (dRib-1-P) and ribose 1-phosphate (Rib-1-P) to deoxy-ribose 5-phosphate (dRib-5-P) and ribose 5-phosphate (Rib-5-P), respectively. This chain is Phosphopentomutase, found in Streptococcus pyogenes serotype M5 (strain Manfredo).